The primary structure comprises 359 residues: Histidinol-phosphate aminotransferase (359 aa).

An N6-(pyridoxal phosphate)lysine modification is found at K212.

The protein belongs to the class-II pyridoxal-phosphate-dependent aminotransferase family. Histidinol-phosphate aminotransferase subfamily. In terms of assembly, homodimer. Requires pyridoxal 5'-phosphate as cofactor.

The catalysed reaction is L-histidinol phosphate + 2-oxoglutarate = 3-(imidazol-4-yl)-2-oxopropyl phosphate + L-glutamate. The protein operates within amino-acid biosynthesis; L-histidine biosynthesis; L-histidine from 5-phospho-alpha-D-ribose 1-diphosphate: step 7/9. The protein is Histidinol-phosphate aminotransferase of Buchnera aphidicola subsp. Schlechtendalia chinensis.